The primary structure comprises 296 residues: Chelated iron transport system membrane protein YfeB (296 aa).

The region spanning 11-246 (LVVDNVTVTY…NLEMTFGGVL (236 aa)) is the ABC transporter domain. 44 to 51 (GVNGSGKS) contributes to the ATP binding site. The disordered stretch occupies residues 276–296 (VFYGHTKNDPPAQSQSKEQNS). Over residues 286-296 (PAQSQSKEQNS) the composition is skewed to polar residues.

This sequence belongs to the ABC transporter superfamily.

The protein resides in the cell inner membrane. Its function is as follows. Part of an ATP-driven transport system YfeABCD for chelated iron. This chain is Chelated iron transport system membrane protein YfeB (yfeB), found in Yersinia pestis.